A 633-amino-acid chain; its full sequence is UvrABC system protein C (633 aa).

One can recognise a GIY-YIG domain in the interval 37–115 (PKPGVYRMFG…IKSLKPRFNI (79 aa)). The UVR domain occupies 225–260 (NALREDLQTRMAQASEAMDFETAAKLRDRIRAIAAV).

It belongs to the UvrC family. In terms of assembly, interacts with UvrB in an incision complex.

Its subcellular location is the cytoplasm. The UvrABC repair system catalyzes the recognition and processing of DNA lesions. UvrC both incises the 5' and 3' sides of the lesion. The N-terminal half is responsible for the 3' incision and the C-terminal half is responsible for the 5' incision. This Maricaulis maris (strain MCS10) (Caulobacter maris) protein is UvrABC system protein C.